The chain runs to 287 residues: ATP phosphoribosyltransferase (287 aa).

It belongs to the ATP phosphoribosyltransferase family. Long subfamily. As to quaternary structure, equilibrium between an active dimeric form, an inactive hexameric form and higher aggregates. Interconversion between the various forms is largely reversible and is influenced by the natural substrates and inhibitors of the enzyme. The cofactor is Mg(2+).

The protein resides in the cytoplasm. The catalysed reaction is 1-(5-phospho-beta-D-ribosyl)-ATP + diphosphate = 5-phospho-alpha-D-ribose 1-diphosphate + ATP. Its pathway is amino-acid biosynthesis; L-histidine biosynthesis; L-histidine from 5-phospho-alpha-D-ribose 1-diphosphate: step 1/9. Its activity is regulated as follows. Feedback inhibited by histidine. Catalyzes the condensation of ATP and 5-phosphoribose 1-diphosphate to form N'-(5'-phosphoribosyl)-ATP (PR-ATP). Has a crucial role in the pathway because the rate of histidine biosynthesis seems to be controlled primarily by regulation of HisG enzymatic activity. This Mycobacterium leprae (strain TN) protein is ATP phosphoribosyltransferase (hisG).